Consider the following 344-residue polypeptide: NDP-polyphosphate phosphotransferase 2 (344 aa).

Residues 1–60 are disordered; that stretch reads METAKPIAPQKDSKANGVDATDPVVKVASPQDPAGDAKVEDATAPVAEVEPRTPRNRRLP.

This sequence belongs to the polyphosphate kinase 2 (PPK2) family. Class I subfamily. It depends on Mg(2+) as a cofactor.

The enzyme catalyses [phosphate](n) + ATP = [phosphate](n+1) + ADP. It carries out the reaction [phosphate](n) + CTP = [phosphate](n+1) + CDP. It catalyses the reaction [phosphate](n) + GTP = [phosphate](n+1) + GDP. The catalysed reaction is [phosphate](n) + UTP = [phosphate](n+1) + UDP. In terms of biological role, uses inorganic polyphosphate (polyP) as a donor to convert NDP to NTP. PolyP hydrolysis is slightly faster with ADP, but it can also use GDP, CDP and UDP. The protein is NDP-polyphosphate phosphotransferase 2 of Ruegeria pomeroyi (strain ATCC 700808 / DSM 15171 / DSS-3) (Silicibacter pomeroyi).